The chain runs to 152 residues: SsrA-binding protein (152 aa).

This sequence belongs to the SmpB family.

It is found in the cytoplasm. In terms of biological role, required for rescue of stalled ribosomes mediated by trans-translation. Binds to transfer-messenger RNA (tmRNA), required for stable association of tmRNA with ribosomes. tmRNA and SmpB together mimic tRNA shape, replacing the anticodon stem-loop with SmpB. tmRNA is encoded by the ssrA gene; the 2 termini fold to resemble tRNA(Ala) and it encodes a 'tag peptide', a short internal open reading frame. During trans-translation Ala-aminoacylated tmRNA acts like a tRNA, entering the A-site of stalled ribosomes, displacing the stalled mRNA. The ribosome then switches to translate the ORF on the tmRNA; the nascent peptide is terminated with the 'tag peptide' encoded by the tmRNA and targeted for degradation. The ribosome is freed to recommence translation, which seems to be the essential function of trans-translation. The polypeptide is SsrA-binding protein (Rickettsia africae (strain ESF-5)).